The following is a 385-amino-acid chain: Lipid-A-disaccharide synthase (385 aa).

The protein belongs to the LpxB family.

It carries out the reaction a lipid X + a UDP-2-N,3-O-bis[(3R)-3-hydroxyacyl]-alpha-D-glucosamine = a lipid A disaccharide + UDP + H(+). The protein operates within bacterial outer membrane biogenesis; LPS lipid A biosynthesis. Functionally, condensation of UDP-2,3-diacylglucosamine and 2,3-diacylglucosamine-1-phosphate to form lipid A disaccharide, a precursor of lipid A, a phosphorylated glycolipid that anchors the lipopolysaccharide to the outer membrane of the cell. The protein is Lipid-A-disaccharide synthase of Xylella fastidiosa (strain M23).